The sequence spans 113 residues: Transmembrane protein 256 (113 aa).

A signal peptide spans 1–29 (MAGPAAAFRRLGALSGAAALGFASYGAHG). The Extracellular portion of the chain corresponds to 30–63 (AQFPDAYGKELFDKANKHHFLHSLALLGVPHCRK). Position 43 is an N6-acetyllysine (K43). A helical membrane pass occupies residues 64-84 (PLWAGLLLASGTTLFCTSFYY). Over 85-92 (QALSGDPS) the chain is Cytoplasmic. A helical membrane pass occupies residues 93-113 (IQTLAPAGGTLLLLGWLALAL).

Belongs to the TMEM256 family.

It is found in the membrane. The polypeptide is Transmembrane protein 256 (TMEM256) (Homo sapiens (Human)).